We begin with the raw amino-acid sequence, 679 residues long: Altered inheritance of mitochondria protein 21 (679 aa).

Positions 1 to 85 (MSSEVTPKVP…LQRPVRRSTT (85 aa)) are disordered. Over residues 9 to 19 (VPERPSRRKTS) the composition is skewed to basic and acidic residues. Thr18 carries the post-translational modification Phosphothreonine. Ser36 carries the post-translational modification Phosphoserine. Thr58 bears the Phosphothreonine mark. Ser70 carries the post-translational modification Phosphoserine. Thr85 is modified (phosphothreonine). At Ser104 the chain carries Phosphoserine. Disordered regions lie at residues 111-522 (IHNV…EKIE), 549-580 (IDTT…PNKM), and 593-679 (EKLP…FHSL). Composition is skewed to polar residues over residues 133 to 149 (QNGQ…TNPS) and 167 to 178 (SPSNLVNKSNNE). The segment covering 179 to 213 (VTEHSDSEDLTEKQKVHAALDNEAGDRSHFEEKLI) has biased composition (basic and acidic residues). A phosphoserine mark is found at Ser183, Ser206, and Ser231. Residues 243–272 (SDDKAEKFTKHPESSLEELQKHQEQQEEKI) are compositionally biased toward basic and acidic residues. At Thr277 the chain carries Phosphothreonine. Position 284 is a phosphoserine (Ser284). Positions 296 to 323 (EVNSQPQGPSDTETVIAATSSNVPSQIA) are enriched in polar residues. Ser324 carries the post-translational modification Phosphoserine. Basic and acidic residues-rich tracts occupy residues 339-361 (KKDF…RVSE) and 372-383 (EESKIPKIPSER). The interval 383 to 396 (RPKRRAPPPVPKKP) is interaction with SH3 domain of ABP1. 2 stretches are compositionally biased toward polar residues: residues 414-427 (DLHN…TTAS) and 437-452 (SSIT…TSKL). A compositionally biased stretch (basic and acidic residues) spans 471–482 (LEKKLSSPDTES). Residues 501–512 (RRGRGPRGRKLP) show a composition bias toward basic residues. Position 552 is a phosphothreonine (Thr552). The span at 556–576 (QAERALDEKSKSIPEEQREQS) shows a compositional bias: basic and acidic residues. Ser576 carries the phosphoserine modification. Residues 603–614 (PLSQLPQTNTVG) are compositionally biased toward polar residues. Phosphoserine is present on residues Ser620, Ser623, Ser625, Ser627, Ser667, Ser671, Ser675, and Ser678. Over residues 667 to 679 (SALHSEEASFHSL) the composition is skewed to basic and acidic residues.

The protein belongs to the AIM21 family. Interacts with ribosomes. Interacts with ABP1.

It is found in the cytoplasm. The protein resides in the cytoskeleton. The protein localises to the actin patch. Functionally, involved in mitochondrial migration along actin filaments. This chain is Altered inheritance of mitochondria protein 21 (AIM21), found in Saccharomyces cerevisiae (strain JAY291) (Baker's yeast).